We begin with the raw amino-acid sequence, 219 residues long: Thymidylate kinase (219 aa).

Position 7 to 14 (7 to 14 (GIDGAGKS)) interacts with ATP.

The protein belongs to the thymidylate kinase family.

The catalysed reaction is dTMP + ATP = dTDP + ADP. Its function is as follows. Phosphorylation of dTMP to form dTDP in both de novo and salvage pathways of dTTP synthesis. This Chlorobium limicola (strain DSM 245 / NBRC 103803 / 6330) protein is Thymidylate kinase.